The following is a 304-amino-acid chain: Glycosyltransferase AglE (304 aa).

Belongs to the glycosyltransferase 2 family.

It localises to the cell membrane. It functions in the pathway cell surface structure biogenesis; S-layer biogenesis. Its function is as follows. Involved in the assembly of a N-linked pentasaccharide that decorates the S-layer glycoprotein and flagellins. Catalyzes the addition to the dolichol phosphate carrier of the hexuronic acid found at position 4 of the pentasaccharide. The chain is Glycosyltransferase AglE (aglE) from Haloferax volcanii (strain ATCC 29605 / DSM 3757 / JCM 8879 / NBRC 14742 / NCIMB 2012 / VKM B-1768 / DS2) (Halobacterium volcanii).